A 742-amino-acid chain; its full sequence is Kanadaptin (742 aa).

Residues 1–16 show a composition bias toward polar residues; the sequence is MADILSQSETLASQDL. The disordered stretch occupies residues 1 to 112; sequence MADILSQSET…PPWGGPATAP (112 aa). The segment covering 27 to 43 has biased composition (low complexity); sequence VSPAARSKAPASSSSNP. At S28 the chain carries Phosphoserine. A compositionally biased stretch (basic and acidic residues) spans 72-82; the sequence is GDFRSLQEEQS. At S90 the chain carries Phosphoserine. A compositionally biased stretch (pro residues) spans 96-106; the sequence is RAPPYQEPPWG. The 61-residue stretch at 135-195 folds into the FHA domain; it reads CLFGRLSGCD…HGTFLNKTRI (61 aa). The tract at residues 254–282 is disordered; that stretch reads LGEDSDEEEEMDTSERKINAGSQDDEMGC. Residues 256 to 265 show a composition bias toward acidic residues; that stretch reads EDSDEEEEMD. Residues S258 and S412 each carry the phosphoserine modification. K441 is covalently cross-linked (Glycyl lysine isopeptide (Lys-Gly) (interchain with G-Cter in SUMO2)). A coiled-coil region spans residues 443 to 476; sequence ETFESLVAKLNDAERELSEISERLKASSQVLSES. Phosphoserine is present on S476. The interval 565–742 is disordered; that stretch reads LKTGTVGKLP…RTHLNDKYGY (178 aa). Residues 591–606 are compositionally biased toward acidic residues; sequence PEVEEEEEEEEEEEKE. Residues 607-619 show a composition bias toward basic and acidic residues; the sequence is KEEHEKKKLEDGS. 2 positions are modified to phosphoserine: S655 and S658. Residues 699 to 708 are compositionally biased toward low complexity; it reads PGPGKLPPTL. Basic and acidic residues predominate over residues 732-742; that stretch reads GRTHLNDKYGY.

In terms of tissue distribution, ubiquitously expressed.

It localises to the nucleus. Its subcellular location is the cytoplasm. The chain is Kanadaptin (SLC4A1AP) from Homo sapiens (Human).